The chain runs to 518 residues: Crotonobetaine/carnitine--CoA ligase (518 aa).

The protein belongs to the ATP-dependent AMP-binding enzyme family.

It carries out the reaction 4-(trimethylamino)butanoate + ATP + CoA = 4-(trimethylamino)butanoyl-CoA + AMP + diphosphate. It catalyses the reaction crotonobetaine + ATP + CoA = crotonobetainyl-CoA + AMP + diphosphate. The catalysed reaction is (R)-carnitine + ATP + CoA = (R)-carnitinyl-CoA + AMP + diphosphate. It participates in amine and polyamine metabolism; carnitine metabolism. Functionally, catalyzes the transfer of CoA to carnitine, generating the initial carnitinyl-CoA needed for the CaiB reaction cycle. Also has activity toward crotonobetaine and gamma-butyrobetaine. This Proteus sp. (strain LE138) protein is Crotonobetaine/carnitine--CoA ligase.